The sequence spans 219 residues: U-scoloptoxin(11)-Sm7a (219 aa).

The signal sequence occupies residues 1–15 (MYLFLMINYFVLANS).

This sequence belongs to the scoloptoxin-11 family. In terms of processing, contains 8 disulfide bonds. In terms of tissue distribution, expressed by the venom gland.

The protein resides in the secreted. This chain is U-scoloptoxin(11)-Sm7a, found in Scolopendra morsitans (Tanzanian blue ringleg centipede).